A 132-amino-acid chain; its full sequence is Small ribosomal subunit protein uS8 (132 aa).

The protein belongs to the universal ribosomal protein uS8 family. Part of the 30S ribosomal subunit. Contacts proteins S5 and S12.

In terms of biological role, one of the primary rRNA binding proteins, it binds directly to 16S rRNA central domain where it helps coordinate assembly of the platform of the 30S subunit. This chain is Small ribosomal subunit protein uS8, found in Halothermothrix orenii (strain H 168 / OCM 544 / DSM 9562).